Consider the following 314-residue polypeptide: Pseudouridine-5'-phosphate glycosidase (314 aa).

Glu-30 acts as the Proton donor in catalysis. 2 residues coordinate substrate: Lys-91 and Val-111. Mn(2+) is bound at residue Asp-143. Ser-145 to Asp-147 is a binding site for substrate. Catalysis depends on Lys-164, which acts as the Nucleophile.

This sequence belongs to the pseudouridine-5'-phosphate glycosidase family. Homotrimer. Mn(2+) serves as cofactor.

It catalyses the reaction D-ribose 5-phosphate + uracil = psi-UMP + H2O. In terms of biological role, catalyzes the reversible cleavage of pseudouridine 5'-phosphate (PsiMP) to ribose 5-phosphate and uracil. Functions biologically in the cleavage direction, as part of a pseudouridine degradation pathway. The chain is Pseudouridine-5'-phosphate glycosidase from Cupriavidus pinatubonensis (strain JMP 134 / LMG 1197) (Cupriavidus necator (strain JMP 134)).